The sequence spans 330 residues: D-lactate dehydrogenase (330 aa).

NAD(+) contacts are provided by residues Arg-156–Ile-157, Asp-176, Val-206–Pro-207, Ala-233–Arg-235, and Asp-259. Arg-235 is an active-site residue. Residue Glu-264 is part of the active site. The Proton donor role is filled by His-296.

Belongs to the D-isomer specific 2-hydroxyacid dehydrogenase family.

The enzyme catalyses (R)-lactate + NAD(+) = pyruvate + NADH + H(+). The polypeptide is D-lactate dehydrogenase (ldhD) (Staphylococcus aureus (strain MRSA252)).